The primary structure comprises 248 residues: 3-deoxy-manno-octulosonate cytidylyltransferase (248 aa).

This sequence belongs to the KdsB family.

It is found in the cytoplasm. It catalyses the reaction 3-deoxy-alpha-D-manno-oct-2-ulosonate + CTP = CMP-3-deoxy-beta-D-manno-octulosonate + diphosphate. It participates in nucleotide-sugar biosynthesis; CMP-3-deoxy-D-manno-octulosonate biosynthesis; CMP-3-deoxy-D-manno-octulosonate from 3-deoxy-D-manno-octulosonate and CTP: step 1/1. It functions in the pathway bacterial outer membrane biogenesis; lipopolysaccharide biosynthesis. Its function is as follows. Activates KDO (a required 8-carbon sugar) for incorporation into bacterial lipopolysaccharide in Gram-negative bacteria. This Shigella flexneri protein is 3-deoxy-manno-octulosonate cytidylyltransferase.